Reading from the N-terminus, the 99-residue chain is Ubiquitin-related modifier 1 homolog (99 aa).

G99 bears the 1-thioglycine mark. G99 participates in a covalent cross-link: Glycyl lysine isopeptide (Gly-Lys) (interchain with K-? in acceptor proteins).

It belongs to the URM1 family. Post-translationally, C-terminal thiocarboxylation occurs in 2 steps, it is first acyl-adenylated (-COAMP) via the hesA/moeB/thiF part of the MOCS3 homolog, then thiocarboxylated (-COSH) via the rhodanese domain of the MOCS3 homolog.

It is found in the cytoplasm. It participates in tRNA modification; 5-methoxycarbonylmethyl-2-thiouridine-tRNA biosynthesis. Its function is as follows. Acts as a sulfur carrier required for 2-thiolation of mcm(5)S(2)U at tRNA wobble positions of cytosolic tRNA(Lys), tRNA(Glu) and tRNA(Gln). Serves as sulfur donor in tRNA 2-thiolation reaction by being thiocarboxylated (-COSH) at its C-terminus by MOCS3. The sulfur is then transferred to tRNA to form 2-thiolation of mcm(5)S(2)U. Also acts as a ubiquitin-like protein (UBL) that is covalently conjugated via an isopeptide bond to lysine residues of target proteins. The thiocarboxylated form serves as substrate for conjugation and oxidative stress specifically induces the formation of UBL-protein conjugates. The protein is Ubiquitin-related modifier 1 homolog of Chlamydomonas reinhardtii (Chlamydomonas smithii).